The sequence spans 817 residues: Lon protease (817 aa).

Positions 44–239 constitute a Lon N-terminal domain; that stretch reads LPILPLRNTV…ETLRYMNVEL (196 aa). 390 to 397 contributes to the ATP binding site; it reads GPPGVGKT. The Lon proteolytic domain occupies 626–807; the sequence is NDVAGVVTGL…SEVLAIALTD (182 aa). Active-site residues include S713 and K756.

It belongs to the peptidase S16 family. Homohexamer. Organized in a ring with a central cavity.

The protein resides in the cytoplasm. The enzyme catalyses Hydrolysis of proteins in presence of ATP.. In terms of biological role, ATP-dependent serine protease that mediates the selective degradation of mutant and abnormal proteins as well as certain short-lived regulatory proteins. Required for cellular homeostasis and for survival from DNA damage and developmental changes induced by stress. Degrades polypeptides processively to yield small peptide fragments that are 5 to 10 amino acids long. Binds to DNA in a double-stranded, site-specific manner. The protein is Lon protease of Flavobacterium johnsoniae (strain ATCC 17061 / DSM 2064 / JCM 8514 / BCRC 14874 / CCUG 350202 / NBRC 14942 / NCIMB 11054 / UW101) (Cytophaga johnsonae).